The primary structure comprises 385 residues: Isocitrate dehydrogenase [NAD] subunit beta, mitochondrial (385 aa).

Residues 1-34 (MAALSGVRWLTRALVSAGNPGAWRGLSTSAAAHA) constitute a mitochondrion transit peptide. Lys-199 is subject to N6-acetyllysine.

The protein belongs to the isocitrate and isopropylmalate dehydrogenases family. Heterooligomer of subunits alpha (IDH3A), beta (IDH3B), and gamma (IDH3G) in the apparent ratio of 2:1:1. The heterodimer containing one IDH3A and one IDH3B subunit and the heterodimer containing one IDH3A and one IDH3G subunit assemble into a heterotetramer (which contains two subunits of IDH3A, one of IDH3B and one of IDH3G) and further into the heterooctamer.

The protein localises to the mitochondrion. Its activity is regulated as follows. The heterotetramer and the heterodimer composed of IDH3A and IDH3G subunits can be allosterically activated by citrate (CIT) or/and ADP, and the two activators can act independently or synergistically. The heterodimer composed of IDH3A and IDH3B subunits cannot be allosterically regulated and the allosteric regulation of the heterotetramer is through the IDH3G subunit and not the IDH3B subunit. The IDH3G subunit contains the allosteric site which consists of a CIT-binding site and an ADP-binding site, and the binding of CIT and ADP causes conformational changes at the allosteric site which are transmitted to the active site in the catalytic subunit (IDH3A) through a cascade of conformational changes at the heterodimer interface, leading to stabilization of the isocitrate-binding at the active site and thus activation of the enzyme. ATP can activate the heterotetramer and the heterodimer composed of IDH3A and IDH3G subunits at low concentrations but inhibits their activities at high concentrations, whereas ATP exhibits only inhibitory effect on the heterodimer composed of IDH3A and IDH3B subunits. Its function is as follows. Plays a structural role to facilitate the assembly and ensure the full activity of the enzyme catalyzing the decarboxylation of isocitrate (ICT) into alpha-ketoglutarate. The heterodimer composed of the alpha (IDH3A) and beta (IDH3B) subunits and the heterodimer composed of the alpha (IDH3A) and gamma (IDH3G) subunits, have considerable basal activity but the full activity of the heterotetramer (containing two subunits of IDH3A, one of IDH3B and one of IDH3G) requires the assembly and cooperative function of both heterodimers. The protein is Isocitrate dehydrogenase [NAD] subunit beta, mitochondrial (IDH3B) of Macaca fascicularis (Crab-eating macaque).